The chain runs to 261 residues: Vacuolar iron transporter (261 aa).

Residues 66-86 traverse the membrane as a helical segment; the sequence is GQVLIAALAALFAGALSMAVG. The Fe cation site is built by glutamate 105, glutamate 108, glutamate 116, glutamate 119, and glutamate 154. 3 consecutive transmembrane segments (helical) span residues 170–190, 197–217, and 233–253; these read MVSFAMFITFGCIPLLVGAWI, IGAITGVSLILLAISGAVGAF, and GGALAMAITIGVGFLSETLNI.

It belongs to the CCC1 family.

It localises to the vacuole membrane. The catalysed reaction is Fe(2+)(in) = Fe(2+)(out). Functionally, vacuolar iron transporter involved in the transfer of iron ions from the cytosol to the vacuole for intracellular iron storage. The protein is Vacuolar iron transporter of Acanthamoeba castellanii (strain ATCC 30010 / Neff).